Consider the following 318-residue polypeptide: Molybdenum cofactor insertion chaperone PaoD (318 aa).

In terms of assembly, homodimer in solution. Interacts with MocA.

Its function is as follows. Chaperone required for the production of an active PaoABC aldehyde oxidoreductase. Stabilizes the PaoC subunit and is required for the insertion of the molybdenum cofactor into this subunit. Binds molybdenum cofactor. Binds the molybdopterin cytosine dinucleotide (MCD) form of the cofactor after its formation by the molybdenum cofactor cytidylyltransferase MocA. This Escherichia coli (strain K12) protein is Molybdenum cofactor insertion chaperone PaoD.